The sequence spans 411 residues: Glucose-1-phosphate adenylyltransferase (411 aa).

Residues G164, 179-180, and S197 each bind alpha-D-glucose 1-phosphate; that span reads EK.

It belongs to the bacterial/plant glucose-1-phosphate adenylyltransferase family. As to quaternary structure, homotetramer.

It carries out the reaction alpha-D-glucose 1-phosphate + ATP + H(+) = ADP-alpha-D-glucose + diphosphate. The protein operates within glycan biosynthesis; glycogen biosynthesis. In terms of biological role, involved in the biosynthesis of ADP-glucose, a building block required for the elongation reactions to produce glycogen. Catalyzes the reaction between ATP and alpha-D-glucose 1-phosphate (G1P) to produce pyrophosphate and ADP-Glc. The sequence is that of Glucose-1-phosphate adenylyltransferase from Corynebacterium kroppenstedtii (strain DSM 44385 / JCM 11950 / CIP 105744 / CCUG 35717).